Consider the following 447-residue polypeptide: MTKQIITLVGRPNVGKSTLFNRLSIRKKAIVHDLPGVTRDRKYTDGKIGSFEFLLIDTPGLDENPNSMGERLIEQTTKAILEADLICFMVDGRSGILPDDKLLSSFVRKYNKPAILVVNKCEKAFDFDKEYYKLGFDSMIAISAEHGTGLIDLYDEIIAKLPEEESIKTNIADPIKGDCLQIVVSGRPNAGKSTFINALINDERLLTGPEAGITRESIEIDWQYKNNHIKLIDTAGLRKKSTITESLEKLSASDTINSIKFANTVILMIDALAPLKQQDLNIASHVVHEGRSIVIVVNKWDLVKESEKEAFQEEFYYQINTHLPQVKGIPVLFISAINKQNIEQVLDACLKIYKIWNKKITTSKLNEWLNFTTEAHLLPLQKGGRRVRVKYMTQTKTRPPTFKLFSNNPEKITDSYTRYLVNNMREAFDMPGVPIRFIYVKTKNPYV.

EngA-type G domains follow at residues 4–165 (QIIT…PEEE) and 180–357 (LQIV…KIWN). Residues 10–17 (GRPNVGKS), 57–61 (DTPGL), 119–122 (NKCE), 186–193 (GRPNAGKS), 233–237 (DTAGL), and 298–301 (NKWD) contribute to the GTP site. The region spanning 358–443 (KKITTSKLNE…PIRFIYVKTK (86 aa)) is the KH-like domain.

This sequence belongs to the TRAFAC class TrmE-Era-EngA-EngB-Septin-like GTPase superfamily. EngA (Der) GTPase family. As to quaternary structure, associates with the 50S ribosomal subunit.

In terms of biological role, GTPase that plays an essential role in the late steps of ribosome biogenesis. This Rickettsia conorii (strain ATCC VR-613 / Malish 7) protein is GTPase Der.